We begin with the raw amino-acid sequence, 1441 residues long: Lysophospholipase NTE1 (1441 aa).

Residues 1 to 22 (MWLTSYVLPRLKNILLLQFHIT) lie on the Lumenal side of the membrane. Residues 23 to 43 (LPLNYLVLLLLSTVIITYLFL) form a helical membrane-spanning segment. The Cytoplasmic portion of the chain corresponds to 44–1441 (RTRILSNYSQ…ENMLQRRNSI (1398 aa)). Disordered regions lie at residues 154-173 (SNPS…PSND), 210-236 (THLN…TGEI), 376-445 (QDDT…NSSS), and 551-585 (NRTG…HFRN). Polar residues predominate over residues 376-388 (QDDTGSSASTIQK). The segment covering 572-585 (SRTDRSESFDHFRN) has biased composition (basic and acidic residues). A nucleoside 3',5'-cyclic phosphate is bound by residues 592–718 (NQFS…LTNS) and 707–836 (IYLK…VAKK). The region spanning 1137–1301 (LVLGGGGARG…VDNLPVTEMT (165 aa)) is the PNPLA domain. Residues 1141 to 1146 (GGGARG) carry the GXGXXG motif. The GXSXG signature appears at 1168-1172 (GTSIG). S1170 acts as the Nucleophile in catalysis. The active-site Proton acceptor is D1288. The short motif at 1288–1290 (DGG) is the DGA/G element.

It belongs to the NTE family.

It localises to the endoplasmic reticulum membrane. The enzyme catalyses a 1-acyl-sn-glycero-3-phosphocholine + H2O = sn-glycerol 3-phosphocholine + a fatty acid + H(+). With respect to regulation, inhibited by organophosphorus esters. Intracellular phospholipase B that catalyzes the double deacylation of phosphatidylcholine (PC) to glycerophosphocholine (GroPCho). Plays an important role in membrane lipid homeostasis. Responsible for the rapid PC turnover in response to inositol, elevated temperatures, or when choline is present in the growth medium. This Kluyveromyces lactis (strain ATCC 8585 / CBS 2359 / DSM 70799 / NBRC 1267 / NRRL Y-1140 / WM37) (Yeast) protein is Lysophospholipase NTE1 (NTE1).